We begin with the raw amino-acid sequence, 214 residues long: Membrane-spanning 4-domains subfamily A member 3 (214 aa).

The tract at residues 1 to 31 (MASHEVDNAELGSASAHGTPGSEAGPEELNT) is disordered. Topologically, residues 1-49 (MASHEVDNAELGSASAHGTPGSEAGPEELNTSVYQPIDGSPDYQKAKLQ) are cytoplasmic. Residues 50–70 (VLGAIQILNAAMILALGVFLG) traverse the membrane as a helical segment. Residues 71 to 81 (SLQYPYHFQKH) lie on the Extracellular side of the membrane. Residues 82–102 (FFFFTFYTGYPIWGAVFFCSS) form a helical membrane-spanning segment. The Cytoplasmic segment spans residues 103–124 (GTLSVVAGIKPTRTWIQNSFGM). A helical membrane pass occupies residues 125–145 (NIASATIALVGTAFLSLNIAV). Residues 146 to 175 (NIQSLRSCHSSSESPDLCNYMGSISNGMVS) lie on the Extracellular side of the membrane. The helical transmembrane segment at 176–196 (LLLILTLLELCVTISTIAMWC) threads the bilayer. Over 197 to 214 (NANCCNSREEISSPPNSV) the chain is Cytoplasmic.

This sequence belongs to the MS4A family. In terms of assembly, interacts with CDKN3. Interacts with CDKN3-CDK2 complexes through its binding to CDKN3; this interaction facilitates dissociation of cyclin A from CDKN3-CDK2 complexes. Expressed specifically in hematopoietic cells and tissues.

Its subcellular location is the endomembrane system. It localises to the cytoplasm. It is found in the perinuclear region. Its function is as follows. Hematopoietic modulator for the G1-S cell cycle transition. Modulates the level of phosphorylation of cyclin-dependent kinase 2 (CDK2) through its direct binding to cyclin-dependent kinase inhibitor 3 (CDKN3/KAP). This is Membrane-spanning 4-domains subfamily A member 3 (MS4A3) from Homo sapiens (Human).